The chain runs to 171 residues: MNHFELFGLPLQFQLDGSLLSSQFRDLQRQFHPDKFAIASERDRLLAVQKAAQINDAYQVLKNPISRAEYLLVQHGEDIRGEQQTMQDPMFLMEQMELREELEDIADSSDPEDALFAFEGKVSKMYKQQLSAIQQELESEAWLEAADRVRKLKFIAKLKNEIELVEDRLIG.

The 73-residue stretch at N2–Q74 folds into the J domain.

This sequence belongs to the HscB family. As to quaternary structure, interacts with HscA and stimulates its ATPase activity.

Functionally, co-chaperone involved in the maturation of iron-sulfur cluster-containing proteins. Seems to help targeting proteins to be folded toward HscA. The chain is Co-chaperone protein HscB homolog from Vibrio atlanticus (strain LGP32) (Vibrio splendidus (strain Mel32)).